The following is a 310-amino-acid chain: Acetyl-coenzyme A carboxylase carboxyl transferase subunit beta (310 aa).

The CoA carboxyltransferase N-terminal domain maps to 27–296 (LWKKCPKCSA…PEFENEEELE (270 aa)). Zn(2+) is bound by residues C31, C34, C50, and C53. The C4-type zinc-finger motif lies at 31–53 (CPKCSAVLYRPELEKNLDVCPKC). A disordered region spans residues 285-310 (PEPEFENEEELEEEEMERPEPPDNVE). Residues 287 to 310 (PEFENEEELEEEEMERPEPPDNVE) are compositionally biased toward acidic residues.

Belongs to the AccD/PCCB family. Acetyl-CoA carboxylase is a heterohexamer composed of biotin carboxyl carrier protein (AccB), biotin carboxylase (AccC) and two subunits each of ACCase subunit alpha (AccA) and ACCase subunit beta (AccD). Zn(2+) serves as cofactor.

It localises to the cytoplasm. The enzyme catalyses N(6)-carboxybiotinyl-L-lysyl-[protein] + acetyl-CoA = N(6)-biotinyl-L-lysyl-[protein] + malonyl-CoA. Its pathway is lipid metabolism; malonyl-CoA biosynthesis; malonyl-CoA from acetyl-CoA: step 1/1. Functionally, component of the acetyl coenzyme A carboxylase (ACC) complex. Biotin carboxylase (BC) catalyzes the carboxylation of biotin on its carrier protein (BCCP) and then the CO(2) group is transferred by the transcarboxylase to acetyl-CoA to form malonyl-CoA. This Hahella chejuensis (strain KCTC 2396) protein is Acetyl-coenzyme A carboxylase carboxyl transferase subunit beta.